Consider the following 104-residue polypeptide: PE-PGRS family protein PE_PGRS60 (104 aa).

The 60-residue stretch at 1–60 folds into the PE domain; sequence MSYVIAAPEALVAAATDLATLGSTIGAANAAAAGSTTALLTAGADEVSAAIAAYSECTAR. A disordered region spans residues 64–104; that stretch reads HSVRGRRRSMSGSCRPWPQVGAPMRPPRPPASRRCRARSIC. Residues 94–104 are compositionally biased toward basic residues; it reads ASRRCRARSIC.

The protein belongs to the mycobacterial PE family. PGRS subfamily.

Its function is as follows. Binds fibronectin. May contribute to pathogenicity. This chain is PE-PGRS family protein PE_PGRS60, found in Mycobacterium tuberculosis (strain ATCC 25618 / H37Rv).